We begin with the raw amino-acid sequence, 117 residues long: Large ribosomal subunit protein bL20 (117 aa).

This sequence belongs to the bacterial ribosomal protein bL20 family.

Its function is as follows. Binds directly to 23S ribosomal RNA and is necessary for the in vitro assembly process of the 50S ribosomal subunit. It is not involved in the protein synthesizing functions of that subunit. The chain is Large ribosomal subunit protein bL20 from Mannheimia succiniciproducens (strain KCTC 0769BP / MBEL55E).